A 382-amino-acid polypeptide reads, in one-letter code: MKSLSILGSTGSIGLSTLDVVRQHPDRFTITGLAEGHDVTLLAEQIREFKPSIVSVRDEASANQLRELIGESGPEIRWGIEGAAVVGEADGSDMVVSAIVGAAGLVPTVRAIKAGKDIALANKETLVVAGQLVSELVREHKVQLLPVDSEHSAIFQSLSGHRTEDIERIILTASGGPFRKTPAEELKLVKPEQALKHPQWSMGAKITIDSATLMNKGLEVIEAHWLFNMPAEKIGVVVHPQSIIHSMVEYIDGCVMAQLGAPDMRAPIAYALSWPERCESGIKKLDLTQIGTLTFEEPDMKRFPALRLAFDALREGRTYPAVLNAANEIAVAAFLNNNIGFTDIPAIVDKTMQAHEALTPVDLDEYLAVDRWARETAAALTL.

Positions 10, 11, 12, 13, 36, and 122 each coordinate NADPH. Residue Lys123 coordinates 1-deoxy-D-xylulose 5-phosphate. Glu124 contributes to the NADPH binding site. Residue Asp148 coordinates Mn(2+). Positions 149, 150, 174, and 197 each coordinate 1-deoxy-D-xylulose 5-phosphate. Glu150 is a Mn(2+) binding site. Gly203 contacts NADPH. 4 residues coordinate 1-deoxy-D-xylulose 5-phosphate: Ser210, Asn215, Lys216, and Glu219. Glu219 serves as a coordination point for Mn(2+).

It belongs to the DXR family. Mg(2+) serves as cofactor. Requires Mn(2+) as cofactor.

The enzyme catalyses 2-C-methyl-D-erythritol 4-phosphate + NADP(+) = 1-deoxy-D-xylulose 5-phosphate + NADPH + H(+). It functions in the pathway isoprenoid biosynthesis; isopentenyl diphosphate biosynthesis via DXP pathway; isopentenyl diphosphate from 1-deoxy-D-xylulose 5-phosphate: step 1/6. In terms of biological role, catalyzes the NADPH-dependent rearrangement and reduction of 1-deoxy-D-xylulose-5-phosphate (DXP) to 2-C-methyl-D-erythritol 4-phosphate (MEP). This chain is 1-deoxy-D-xylulose 5-phosphate reductoisomerase, found in Prosthecochloris aestuarii (strain DSM 271 / SK 413).